The following is a 68-amino-acid chain: Large ribosomal subunit protein bL32 (68 aa).

The disordered stretch occupies residues methionine 1–serine 21.

This sequence belongs to the bacterial ribosomal protein bL32 family.

This is Large ribosomal subunit protein bL32 from Roseobacter denitrificans (strain ATCC 33942 / OCh 114) (Erythrobacter sp. (strain OCh 114)).